Here is a 550-residue protein sequence, read N- to C-terminus: Methionine--tRNA ligase (550 aa).

The 'HIGH' region motif lies at Pro-13 to His-23. Residues Cys-145, Cys-148, Cys-158, and Cys-161 each contribute to the Zn(2+) site. The 'KMSKS' region motif lies at Gln-331–Ser-335. Lys-334 contacts ATP.

This sequence belongs to the class-I aminoacyl-tRNA synthetase family. MetG type 1 subfamily. In terms of assembly, monomer. Requires Zn(2+) as cofactor.

Its subcellular location is the cytoplasm. It carries out the reaction tRNA(Met) + L-methionine + ATP = L-methionyl-tRNA(Met) + AMP + diphosphate. Its function is as follows. Is required not only for elongation of protein synthesis but also for the initiation of all mRNA translation through initiator tRNA(fMet) aminoacylation. The chain is Methionine--tRNA ligase from Chlamydia trachomatis serovar L2b (strain UCH-1/proctitis).